The following is a 180-amino-acid chain: Adenine phosphoribosyltransferase (180 aa).

Belongs to the purine/pyrimidine phosphoribosyltransferase family. In terms of assembly, homodimer.

The protein resides in the cytoplasm. It catalyses the reaction AMP + diphosphate = 5-phospho-alpha-D-ribose 1-diphosphate + adenine. It functions in the pathway purine metabolism; AMP biosynthesis via salvage pathway; AMP from adenine: step 1/1. In terms of biological role, catalyzes a salvage reaction resulting in the formation of AMP, that is energically less costly than de novo synthesis. The polypeptide is Adenine phosphoribosyltransferase (Haemophilus influenzae (strain 86-028NP)).